Here is a 96-residue protein sequence, read N- to C-terminus: Phosphoribosyl-ATP pyrophosphatase (96 aa).

Belongs to the PRA-PH family.

The protein resides in the cytoplasm. It carries out the reaction 1-(5-phospho-beta-D-ribosyl)-ATP + H2O = 1-(5-phospho-beta-D-ribosyl)-5'-AMP + diphosphate + H(+). It functions in the pathway amino-acid biosynthesis; L-histidine biosynthesis; L-histidine from 5-phospho-alpha-D-ribose 1-diphosphate: step 2/9. The protein is Phosphoribosyl-ATP pyrophosphatase of Methanococcus aeolicus (strain ATCC BAA-1280 / DSM 17508 / OCM 812 / Nankai-3).